The primary structure comprises 460 residues: Lipase member H (460 aa).

The signal sequence occupies residues 1 to 24; it reads MLLRFYFNGLLFVGCLLSWGRSDT. N-linked (GlcNAc...) asparagine glycosylation is found at Asn-67 and Asn-75. The active-site Nucleophile is Ser-163. The N-linked (GlcNAc...) asparagine glycan is linked to Asn-177. The active-site Charge relay system is Asp-187. Residues Cys-242 and Cys-255 are joined by a disulfide bond. The active-site Charge relay system is His-257. Disulfide bonds link Cys-279–Cys-290 and Cys-293–Cys-301. N-linked (GlcNAc...) asparagine glycosylation occurs at Asn-289. N-linked (GlcNAc...) asparagine glycosylation occurs at Asn-366. A disulfide bond links Cys-436 and Cys-455.

The protein belongs to the AB hydrolase superfamily. Lipase family.

Its subcellular location is the secreted. The protein localises to the cell membrane. The catalysed reaction is 1-hexadecanoyl-2-(9Z-octadecenoyl)-sn-glycero-3-phosphate + H2O = 2-(9Z-octadecenoyl)-sn-glycero-3-phosphate + hexadecanoate + H(+). Functionally, hydrolyzes specifically phosphatidic acid (PA) to produce 2-acyl lysophosphatidic acid (LPA; a potent bioactive lipid mediator) and fatty acid. Does not hydrolyze other phospholipids, like phosphatidylserine (PS), phosphatidylcholine (PC) and phosphatidylethanolamine (PE) or triacylglycerol (TG). The sequence is that of Lipase member H (liph) from Xenopus tropicalis (Western clawed frog).